Reading from the N-terminus, the 268-residue chain is tRNA pseudouridine synthase A (268 aa).

Catalysis depends on Asp-52, which acts as the Nucleophile. Tyr-113 serves as a coordination point for substrate.

It belongs to the tRNA pseudouridine synthase TruA family. In terms of assembly, homodimer.

It catalyses the reaction uridine(38/39/40) in tRNA = pseudouridine(38/39/40) in tRNA. Functionally, formation of pseudouridine at positions 38, 39 and 40 in the anticodon stem and loop of transfer RNAs. The polypeptide is tRNA pseudouridine synthase A (Chlamydia felis (strain Fe/C-56) (Chlamydophila felis)).